Here is a 344-residue protein sequence, read N- to C-terminus: Fructose-1,6-bisphosphatase, cytosolic (344 aa).

Residues glutamate 71, glutamate 100, aspartate 121, leucine 123, and aspartate 124 each coordinate Mg(2+). Substrate contacts are provided by residues 124–127 (DGSS), asparagine 215, tyrosine 247, tyrosine 267, and lysine 277. A Mg(2+)-binding site is contributed by glutamate 283.

This sequence belongs to the FBPase class 1 family. Mg(2+) is required as a cofactor.

The protein resides in the cytoplasm. It catalyses the reaction beta-D-fructose 1,6-bisphosphate + H2O = beta-D-fructose 6-phosphate + phosphate. This is Fructose-1,6-bisphosphatase, cytosolic from Oryza coarctata (Wild rice).